The following is a 159-amino-acid chain: Ribosome-binding factor A (159 aa).

The disordered stretch occupies residues 127-159 (TYAGEADPYRRPAVDDAGDSADDADPAEDERPS). The span at 142 to 159 (DAGDSADDADPAEDERPS) shows a compositional bias: acidic residues.

Belongs to the RbfA family. In terms of assembly, monomer. Binds 30S ribosomal subunits, but not 50S ribosomal subunits or 70S ribosomes.

It is found in the cytoplasm. In terms of biological role, one of several proteins that assist in the late maturation steps of the functional core of the 30S ribosomal subunit. Associates with free 30S ribosomal subunits (but not with 30S subunits that are part of 70S ribosomes or polysomes). Required for efficient processing of 16S rRNA. May interact with the 5'-terminal helix region of 16S rRNA. This Beutenbergia cavernae (strain ATCC BAA-8 / DSM 12333 / CCUG 43141 / JCM 11478 / NBRC 16432 / NCIMB 13614 / HKI 0122) protein is Ribosome-binding factor A.